The sequence spans 296 residues: Bifunctional protein FolD (296 aa).

NADP(+)-binding positions include 168–170 (GRS), threonine 197, and valine 238.

Belongs to the tetrahydrofolate dehydrogenase/cyclohydrolase family. In terms of assembly, homodimer.

It carries out the reaction (6R)-5,10-methylene-5,6,7,8-tetrahydrofolate + NADP(+) = (6R)-5,10-methenyltetrahydrofolate + NADPH. The catalysed reaction is (6R)-5,10-methenyltetrahydrofolate + H2O = (6R)-10-formyltetrahydrofolate + H(+). Its pathway is one-carbon metabolism; tetrahydrofolate interconversion. Its function is as follows. Catalyzes the oxidation of 5,10-methylenetetrahydrofolate to 5,10-methenyltetrahydrofolate and then the hydrolysis of 5,10-methenyltetrahydrofolate to 10-formyltetrahydrofolate. This chain is Bifunctional protein FolD, found in Desulfotalea psychrophila (strain LSv54 / DSM 12343).